Here is a 437-residue protein sequence, read N- to C-terminus: Palmitoyltransferase PFA4 (437 aa).

Residues 1-12 (MAGLNDVPFIKG) lie on the Cytoplasmic side of the membrane. A helical transmembrane segment spans residues 13-33 (LAVPSVCALIIFLGYASQFLF). At 34–48 (NYSTTLEPGPPTRRE) the chain is on the lumenal side. The chain crosses the membrane as a helical span at residues 49 to 69 (TIIFNGLLLVLWITYYRTVAT). Topologically, residues 70-130 (DPGRYIFKDR…RNCVSMTTFP (61 aa)) are cytoplasmic. In terms of domain architecture, DHHC spans 87–137 (RWCNKCAAPKPPRAHHCRHCARCVPRMDHHCPWTRNCVSMTTFPHFLRFLI). C117 serves as the catalytic S-palmitoyl cysteine intermediate. The helical transmembrane segment at 131 to 151 (HFLRFLIYTNMSLWMLGYFLW) threads the bilayer. The Lumenal portion of the chain corresponds to 152–173 (QRFSKIWEHRRLPAYLGPSFYG). A helical membrane pass occupies residues 174 to 194 (LICLSLISIVNFVTTVALGIM). Residues 195–437 (LINTVKSWVF…KILKKDGLDD (243 aa)) are Cytoplasmic-facing. The tract at residues 377-419 (LDQGLGWVNSDGDRLRDYGVDEEASEPEGVNDDDDDDDDDDVP) is disordered. The span at 396 to 419 (VDEEASEPEGVNDDDDDDDDDDVP) shows a compositional bias: acidic residues.

Belongs to the DHHC palmitoyltransferase family. PFA4 subfamily.

It localises to the endoplasmic reticulum membrane. The enzyme catalyses L-cysteinyl-[protein] + hexadecanoyl-CoA = S-hexadecanoyl-L-cysteinyl-[protein] + CoA. In terms of biological role, mediates the reversible addition of palmitate to target proteins, thereby regulating their membrane association and biological function. This chain is Palmitoyltransferase PFA4, found in Gibberella zeae (strain ATCC MYA-4620 / CBS 123657 / FGSC 9075 / NRRL 31084 / PH-1) (Wheat head blight fungus).